We begin with the raw amino-acid sequence, 253 residues long: Pimeloyl-[acyl-carrier protein] methyl ester esterase (253 aa).

Substrate-binding positions include tryptophan 18, 78–79, and 139–143; these read SL and FLALD. Serine 78 serves as the catalytic Nucleophile. Residues aspartate 203 and histidine 231 contribute to the active site. Histidine 231 contacts substrate.

The protein belongs to the AB hydrolase superfamily. Carboxylesterase BioH family. In terms of assembly, monomer.

It localises to the cytoplasm. The catalysed reaction is 6-carboxyhexanoyl-[ACP] methyl ester + H2O = 6-carboxyhexanoyl-[ACP] + methanol + H(+). It participates in cofactor biosynthesis; biotin biosynthesis. In terms of biological role, the physiological role of BioH is to remove the methyl group introduced by BioC when the pimeloyl moiety is complete. It allows to synthesize pimeloyl-ACP via the fatty acid synthetic pathway through the hydrolysis of the ester bonds of pimeloyl-ACP esters. This Xanthomonas axonopodis pv. citri (strain 306) protein is Pimeloyl-[acyl-carrier protein] methyl ester esterase.